A 317-amino-acid chain; its full sequence is Toluene-4-sulfonate monooxygenase system reductase subunit TsaB1 (317 aa).

Residues 2–108 (SADVPVTVAA…RATCSEMAPE (107 aa)) enclose the FAD-binding FR-type domain. 110–220 (RRVLLLAGGI…PGSVRMERFK (111 aa)) contributes to the NAD(+) binding site. The 2Fe-2S ferredoxin-type domain occupies 230–317 (QPFELVLQRA…CGGGRLVLDI (88 aa)). [2Fe-2S] cluster contacts are provided by Cys-266, Cys-271, Cys-274, and Cys-304.

As to quaternary structure, monomer. Part of the p-toluenesulfonate methyl-monooxygenase complex TsaBM, comprising the reductase TsaB and the oxygenase TsaM. It depends on FMN as a cofactor.

In terms of biological role, iron-sulfur flavoprotein carrying electrons from NADH to the oxygenase TsaM. Involved in the toluene-4-sulfonate degradation pathway. In Comamonas testosteroni (Pseudomonas testosteroni), this protein is Toluene-4-sulfonate monooxygenase system reductase subunit TsaB1 (tsaB1).